Reading from the N-terminus, the 554-residue chain is 3-(3-hydroxy-phenyl)propionate/3-hydroxycinnamic acid hydroxylase (554 aa).

FAD-binding positions include 17–46 and 285–295; these read QVAIAGAGPVGLMMANYLGQMGIDVLVVEK and FRIDRVLLAGD.

It belongs to the PheA/TfdB FAD monooxygenase family. The cofactor is FAD.

It catalyses the reaction 3-(3-hydroxyphenyl)propanoate + NADH + O2 + H(+) = 3-(2,3-dihydroxyphenyl)propanoate + NAD(+) + H2O. The catalysed reaction is (2E)-3-(3-hydroxyphenyl)prop-2-enoate + NADH + O2 + H(+) = (2E)-3-(2,3-dihydroxyphenyl)prop-2-enoate + NAD(+) + H2O. It participates in aromatic compound metabolism; 3-phenylpropanoate degradation. Catalyzes the insertion of one atom of molecular oxygen into position 2 of the phenyl ring of 3-(3-hydroxyphenyl)propionate (3-HPP) and hydroxycinnamic acid (3HCI). This is 3-(3-hydroxy-phenyl)propionate/3-hydroxycinnamic acid hydroxylase from Escherichia coli O157:H7.